The sequence spans 45 residues: Large ribosomal subunit protein bL34 (45 aa).

It belongs to the bacterial ribosomal protein bL34 family.

In Streptomyces coelicolor (strain ATCC BAA-471 / A3(2) / M145), this protein is Large ribosomal subunit protein bL34 (rpmH).